The primary structure comprises 306 residues: Elongation factor Ts (306 aa).

Residues 80-83 form an involved in Mg(2+) ion dislocation from EF-Tu region; the sequence is TDFV.

This sequence belongs to the EF-Ts family.

The protein resides in the cytoplasm. Its function is as follows. Associates with the EF-Tu.GDP complex and induces the exchange of GDP to GTP. It remains bound to the aminoacyl-tRNA.EF-Tu.GTP complex up to the GTP hydrolysis stage on the ribosome. The sequence is that of Elongation factor Ts from Clostridium kluyveri (strain NBRC 12016).